The primary structure comprises 478 residues: Ribosome biogenesis protein NOP53 (478 aa).

Gly residues predominate over residues 1–10; the sequence is MAAGGSGVGG. Residues 1–51 are disordered; it reads MAAGGSGVGGKRSSKSDADSGFLGLRPTSVDPALRRRRRGPRNKKRGWRRL. Residue alanine 2 is modified to N-acetylalanine. Serine 29 is subject to Phosphoserine. Over residues 35–49 the composition is skewed to basic residues; that stretch reads RRRRRGPRNKKRGWR. A phosphoserine mark is found at serine 93 and serine 305. Residues 148 to 431 are mediates interaction with CDKN2A/isoform tumor suppressor ARF; that stretch reads KEQLWEKLAK…SELTDSLRTL (284 aa). Residues 181 to 478 form a mediates interaction with NF2 region; it reads KPGPQDTVER…EKRAFREIQL (298 aa). Residues 303–344 are disordered; sequence EESDGEGEPGQGEGPEAGDAEVCPTPARLATTEKKTEQQRRR. Positions 333–342 are enriched in basic and acidic residues; sequence TTEKKTEQQR. Positions 342–386 are mediates interaction with human herpesvirus 8 protein ORF16; sequence RRREKAVHRLRVQQAALRAARLRHQELFRLRGIKAQVALRLAELA. 2 nucleolar localization signal regions span residues 347–395 and 396–478; these read AVHR…RQAR and REAE…EIQL.

This sequence belongs to the NOP53 family. In terms of assembly, homooligomer. Interacts with PTEN; regulates PTEN phosphorylation and increases its stability. Interacts with RPL11; retains RPL11 into the nucleolus. Interacts with CDKN2A/isoform tumor suppressor ARF; the interaction is direct and promotes ARF nucleoplasmic relocalization and ubiquitin-mediated proteasomal degradation. Interacts with NPM1; the interaction is direct and competitive with MYC. Interacts with NF2 (via FERM domain); the interaction is direct. Interacts with p53/TP53 (via the oligomerization region); the interaction is direct and may prevent the MDM2-mediated proteasomal degradation of p53/TP53. Interacts with RIGI; may regulate RIGI through USP15-mediated 'Lys-63'-linked deubiquitination. Interacts with UBTF. As to quaternary structure, (Microbial infection) Interacts with herpes simplex virus 1 early proteins ICP22 and ICP0. (Microbial infection) Interacts with Human herpesvirus 8 protein ORF16; may sequester ORF16 in host nucleolus and reduce its antiapoptotic activity. In terms of processing, ubiquitin-mediated proteasomal degradation is regulated by c-JUN. It is associated with relocalization to the nucleoplasm and decreased homooligomerization. Phosphorylated upon DNA damage probably by ATM and DNA-PK; may regulate NOP53 degradation. Expressed at high levels in heart and pancreas, moderate levels in placenta, liver, skeletal muscle, and kidney, and low levels in brain and lung.

It is found in the nucleus. The protein localises to the nucleolus. It localises to the nucleoplasm. Its function is as follows. Nucleolar protein which is involved in the integration of the 5S RNP into the ribosomal large subunit during ribosome biogenesis. In ribosome biogenesis, may also play a role in rRNA transcription. Also functions as a nucleolar sensor that regulates the activation of p53/TP53 in response to ribosome biogenesis perturbation, DNA damage and other stress conditions. DNA damage or perturbation of ribosome biogenesis disrupt the interaction between NOP53 and RPL11 allowing RPL11 transport to the nucleoplasm where it can inhibit MDM2 and allow p53/TP53 activation. It may also positively regulate the function of p53/TP53 in cell cycle arrest and apoptosis through direct interaction, preventing its MDM2-dependent ubiquitin-mediated proteasomal degradation. Originally identified as a tumor suppressor, it may also play a role in cell proliferation and apoptosis by positively regulating the stability of PTEN, thereby antagonizing the PI3K-AKT/PKB signaling pathway. May also inhibit cell proliferation and increase apoptosis through its interaction with NF2. May negatively regulate NPM1 by regulating its nucleoplasmic localization, oligomerization and ubiquitin-mediated proteasomal degradation. Thereby, may prevent NPM1 interaction with MYC and negatively regulate transcription mediated by the MYC-NPM1 complex. May also regulate cellular aerobic respiration. In the cellular response to viral infection, may play a role in the attenuation of interferon-beta through the inhibition of RIGI. This is Ribosome biogenesis protein NOP53 from Homo sapiens (Human).